The chain runs to 216 residues: Purine nucleoside phosphorylase DeoD-type (216 aa).

Phosphate contacts are provided by residues Arg-4, Arg-23, and 67 to 70 (RVGT). A purine D-ribonucleoside contacts are provided by residues 159 to 161 (EME) and 183 to 184 (SD). The active-site Proton donor is Asp-184.

The protein belongs to the PNP/UDP phosphorylase family. In terms of assembly, homohexamer; trimer of homodimers.

The enzyme catalyses a purine D-ribonucleoside + phosphate = a purine nucleobase + alpha-D-ribose 1-phosphate. It carries out the reaction a purine 2'-deoxy-D-ribonucleoside + phosphate = a purine nucleobase + 2-deoxy-alpha-D-ribose 1-phosphate. In terms of biological role, catalyzes the reversible phosphorolytic breakdown of the N-glycosidic bond in the beta-(deoxy)ribonucleoside molecules, with the formation of the corresponding free purine bases and pentose-1-phosphate. In Streptococcus thermophilus, this protein is Purine nucleoside phosphorylase DeoD-type.